Consider the following 189-residue polypeptide: Probable nicotinate-nucleotide adenylyltransferase (189 aa).

The protein belongs to the NadD family.

It carries out the reaction nicotinate beta-D-ribonucleotide + ATP + H(+) = deamido-NAD(+) + diphosphate. Its pathway is cofactor biosynthesis; NAD(+) biosynthesis; deamido-NAD(+) from nicotinate D-ribonucleotide: step 1/1. Its function is as follows. Catalyzes the reversible adenylation of nicotinate mononucleotide (NaMN) to nicotinic acid adenine dinucleotide (NaAD). This is Probable nicotinate-nucleotide adenylyltransferase from Bacillus cereus (strain B4264).